Consider the following 81-residue polypeptide: Adenoregulin-related peptide (81 aa).

The signal sequence occupies residues 1–22; that stretch reads MAFLKKSLLLVLFLGLVSLSIC. Residues 23–43 constitute a propeptide that is removed on maturation; sequence EEEKRENEDEEEQEDDEQSEM. Positions 24-46 are disordered; the sequence is EEKRENEDEEEQEDDEQSEMKRG. Over residues 30–40 the composition is skewed to acidic residues; that stretch reads EDEEEQEDDEQ. Position 78 is an isoleucine amide (Ile-78). Residues 79–81 constitute a propeptide that is removed on maturation; the sequence is GEQ.

As to expression, expressed by the skin glands.

It is found in the secreted. Functionally, has antibacterial activity against Gram-positive bacterium M.luteus NCT C2665 and against Gram-negative bacterium E.coli K12D31. This is Adenoregulin-related peptide from Agalychnis callidryas (Red-eyed tree frog).